The chain runs to 376 residues: Putative phosphoserine aminotransferase (376 aa).

The segment at 1–30 (MADQLTPSLDIPAALKPRDGRFGSGPSKVR) is disordered. Residue Arg-50 coordinates L-glutamate. Pyridoxal 5'-phosphate-binding positions include 84–85 (AT), Phe-108, Thr-154, Asp-176, and Gln-199. Lys-200 carries the post-translational modification N6-(pyridoxal phosphate)lysine. 251 to 252 (NT) lines the pyridoxal 5'-phosphate pocket.

This sequence belongs to the class-V pyridoxal-phosphate-dependent aminotransferase family. SerC subfamily. In terms of assembly, homodimer. Pyridoxal 5'-phosphate is required as a cofactor.

It is found in the cytoplasm. The catalysed reaction is O-phospho-L-serine + 2-oxoglutarate = 3-phosphooxypyruvate + L-glutamate. The enzyme catalyses 4-(phosphooxy)-L-threonine + 2-oxoglutarate = (R)-3-hydroxy-2-oxo-4-phosphooxybutanoate + L-glutamate. It participates in amino-acid biosynthesis; L-serine biosynthesis; L-serine from 3-phospho-D-glycerate: step 2/3. The protein operates within cofactor biosynthesis; pyridoxine 5'-phosphate biosynthesis; pyridoxine 5'-phosphate from D-erythrose 4-phosphate: step 3/5. Its function is as follows. Catalyzes the reversible conversion of 3-phosphohydroxypyruvate to phosphoserine and of 3-hydroxy-2-oxo-4-phosphonooxybutanoate to phosphohydroxythreonine. The polypeptide is Putative phosphoserine aminotransferase (Mycobacterium leprae (strain TN)).